A 146-amino-acid polypeptide reads, in one-letter code: Putative pre-16S rRNA nuclease (146 aa).

Belongs to the YqgF nuclease family.

The protein localises to the cytoplasm. Functionally, could be a nuclease involved in processing of the 5'-end of pre-16S rRNA. The chain is Putative pre-16S rRNA nuclease from Methylobacillus flagellatus (strain ATCC 51484 / DSM 6875 / VKM B-1610 / KT).